Here is a 347-residue protein sequence, read N- to C-terminus: Pre-B-cell leukemia transcription factor 1 (347 aa).

The tract at residues 1-37 is disordered; sequence MDDQPRLMHSHPGVGMAGHPSLSQHMQDGTGANEGDV. The 195-residue stretch at 38–232 folds into the PBC domain; that stretch reads GRKQDIGDIL…VMILRSRFLD (195 aa). A PBC-A region spans residues 45–124; that stretch reads DILQQIMTIT…EGVAGPEKGG (80 aa). Positions 127–232 are PBC-B; that stretch reads AAAAAAAAAS…VMILRSRFLD (106 aa). The segment at residues 233–295 is a DNA-binding region (homeobox; TALE-type); it reads ARRKRRNFNK…NKRIRYKKNI (63 aa). Positions 318-331 are enriched in polar residues; the sequence is VHGSQANSPSTPSS. Residues 318–347 are disordered; that stretch reads VHGSQANSPSTPSSAGGYPSPCYQSDRRIQ.

This sequence belongs to the TALE/PBX homeobox family. Forms a heterodimer with isoform 2 of meis1; the interaction is necessary for neural fate induction. In terms of tissue distribution, shows broad, weak expression from blastula through gastrula stages. At stage 14/15, expressed in a broad arc that gives rise to the forebrain and eyes. More intensely expressed in the lateral neural folds (presumptive neural crest) and as horizontal stripes in the posterior neural plate that give rise to the hindbrain. As development proceeds, expression progresses posteriorly along the neural folds and at stage 21, expression is pronounced in the prospective hindbrain and in migratory neural crest cells. At later stages (stage 26), expression becomes intense within the dorsal portion of the forebrain, and in the optic cup, caudal branchial arch, peripheral to the pronephric anlage, and in the dorsal anterior half of the spinal cord. Expression remains robust in the hindbrain but gradually becomes more restricted. At stage 28, expressed in the dorsal lateral portion of the neural tube and in the somatic layer of the lateral plate mesoderm that surrounds the pronephric anlage.

The protein resides in the nucleus. Acts as a transcriptional activator in complex with isoform 2 of meis1, to induce posterior neural and neural crest gene expression, and thereby specify hindbrain and neural crest cell fate. Binds to a highly conserved region in the promoter of the neural crest gene zic3. Required for the nuclear transport or retention of isoform 2 of meis1. In Xenopus laevis (African clawed frog), this protein is Pre-B-cell leukemia transcription factor 1 (pbx1).